The sequence spans 175 residues: Large ribosomal subunit protein uL10 (175 aa).

Belongs to the universal ribosomal protein uL10 family. In terms of assembly, part of the ribosomal stalk of the 50S ribosomal subunit. The N-terminus interacts with L11 and the large rRNA to form the base of the stalk. The C-terminus forms an elongated spine to which L12 dimers bind in a sequential fashion forming a multimeric L10(L12)X complex.

Functionally, forms part of the ribosomal stalk, playing a central role in the interaction of the ribosome with GTP-bound translation factors. The chain is Large ribosomal subunit protein uL10 from Prochlorococcus marinus (strain MIT 9313).